A 333-amino-acid polypeptide reads, in one-letter code: uncharacterized protein (333 aa).

A signal peptide spans 1-23 (MSRSFMIILTIMLIALSLGEVLA). A helical transmembrane segment spans residues 232–252 (SFFLGVLVTLMILSPVIVYLW).

The protein localises to the membrane. This is an uncharacterized protein from Pyrococcus abyssi (strain GE5 / Orsay).